A 565-amino-acid chain; its full sequence is Protein NRT1/ PTR FAMILY 5.15 (565 aa).

2 helical membrane passes run 49 to 67 (FAYF…GPLG) and 80 to 100 (WSGT…AYLG). Phosphothreonine is present on Thr-104. The next 10 membrane-spanning stretches (helical) occupy residues 110–130 (LIYI…IMGL), 142–162 (SIWV…GQGG), 189–209 (FFNW…IVVA), 217–237 (WAFG…IFLL), 331–351 (IPIW…ITFF), 368–388 (IPAA…VPLY), 409–429 (LQRI…AALV), 454–474 (IWWF…SMVG), 490–510 (IGLS…GFLI), and 534–554 (YFYW…LFIS).

This sequence belongs to the major facilitator superfamily. Proton-dependent oligopeptide transporter (POT/PTR) (TC 2.A.17) family. In terms of tissue distribution, expressed in shoots, roots and leaves.

The protein localises to the membrane. The polypeptide is Protein NRT1/ PTR FAMILY 5.15 (NPF5.15) (Arabidopsis thaliana (Mouse-ear cress)).